A 187-amino-acid polypeptide reads, in one-letter code: ATP synthase subunit b 2 (187 aa).

Residues 1-13 (MAESHATGTTTHT) are compositionally biased toward polar residues. Residues 1-21 (MAESHATGTTTHTEVPHGKPE) form a disordered region. Residues 31-53 (ASQLVSFAIAFALLYVIVSRFAL) traverse the membrane as a helical segment.

The protein belongs to the ATPase B chain family. As to quaternary structure, F-type ATPases have 2 components, F(1) - the catalytic core - and F(0) - the membrane proton channel. F(1) has five subunits: alpha(3), beta(3), gamma(1), delta(1), epsilon(1). F(0) has three main subunits: a(1), b(2) and c(10-14). The alpha and beta chains form an alternating ring which encloses part of the gamma chain. F(1) is attached to F(0) by a central stalk formed by the gamma and epsilon chains, while a peripheral stalk is formed by the delta and b chains.

The protein resides in the cell inner membrane. Its function is as follows. F(1)F(0) ATP synthase produces ATP from ADP in the presence of a proton or sodium gradient. F-type ATPases consist of two structural domains, F(1) containing the extramembraneous catalytic core and F(0) containing the membrane proton channel, linked together by a central stalk and a peripheral stalk. During catalysis, ATP synthesis in the catalytic domain of F(1) is coupled via a rotary mechanism of the central stalk subunits to proton translocation. Component of the F(0) channel, it forms part of the peripheral stalk, linking F(1) to F(0). The b'-subunit is a diverged and duplicated form of b found in plants and photosynthetic bacteria. This Afipia carboxidovorans (strain ATCC 49405 / DSM 1227 / KCTC 32145 / OM5) (Oligotropha carboxidovorans) protein is ATP synthase subunit b 2 (atpF2).